Reading from the N-terminus, the 292-residue chain is NAD kinase (292 aa).

Asp72 functions as the Proton acceptor in the catalytic mechanism. NAD(+) contacts are provided by residues 72-73 (DG), 146-147 (NE), His157, Arg174, Asp176, and 187-192 (TAYSLS).

The protein belongs to the NAD kinase family. A divalent metal cation serves as cofactor.

The protein resides in the cytoplasm. The enzyme catalyses NAD(+) + ATP = ADP + NADP(+) + H(+). In terms of biological role, involved in the regulation of the intracellular balance of NAD and NADP, and is a key enzyme in the biosynthesis of NADP. Catalyzes specifically the phosphorylation on 2'-hydroxyl of the adenosine moiety of NAD to yield NADP. The chain is NAD kinase from Shewanella woodyi (strain ATCC 51908 / MS32).